A 181-amino-acid polypeptide reads, in one-letter code: UPF0228 protein MA_3117 (181 aa).

Belongs to the UPF0228 family.

This Methanosarcina acetivorans (strain ATCC 35395 / DSM 2834 / JCM 12185 / C2A) protein is UPF0228 protein MA_3117.